Reading from the N-terminus, the 299-residue chain is Probable lipid kinase YegS (299 aa).

Positions 2-133 (ANFPDSLLIL…IDMARVNDKT (132 aa)) constitute a DAGKc domain. ATP-binding positions include Thr-40, 66 to 72 (GDGTINE), and Thr-95. Mg(2+)-binding residues include Leu-215, Asp-218, and Leu-220. The active-site Proton acceptor is Glu-271.

The protein belongs to the diacylglycerol/lipid kinase family. YegS lipid kinase subfamily. The cofactor is Mg(2+). Ca(2+) is required as a cofactor.

The protein localises to the cytoplasm. In terms of biological role, probably phosphorylates lipids; the in vivo substrate is unknown. This Salmonella arizonae (strain ATCC BAA-731 / CDC346-86 / RSK2980) protein is Probable lipid kinase YegS.